The following is a 554-amino-acid chain: Formate--tetrahydrofolate ligase (554 aa).

An ATP-binding site is contributed by 67 to 74 (TPTGEGKT).

This sequence belongs to the formate--tetrahydrofolate ligase family.

It carries out the reaction (6S)-5,6,7,8-tetrahydrofolate + formate + ATP = (6R)-10-formyltetrahydrofolate + ADP + phosphate. The protein operates within one-carbon metabolism; tetrahydrofolate interconversion. The sequence is that of Formate--tetrahydrofolate ligase from Finegoldia magna (strain ATCC 29328 / DSM 20472 / WAL 2508) (Peptostreptococcus magnus).